Reading from the N-terminus, the 227-residue chain is Octanoyltransferase (227 aa).

Residues 47-223 form the BPL/LPL catalytic domain; sequence EDTADEIWLL…HLLRLLPPGV (177 aa). Substrate-binding positions include 87–94, 154–156, and 167–169; these read RGGQITYH, ALG, and GLA. The active-site Acyl-thioester intermediate is cysteine 185.

The protein belongs to the LipB family.

It localises to the cytoplasm. The catalysed reaction is octanoyl-[ACP] + L-lysyl-[protein] = N(6)-octanoyl-L-lysyl-[protein] + holo-[ACP] + H(+). The protein operates within protein modification; protein lipoylation via endogenous pathway; protein N(6)-(lipoyl)lysine from octanoyl-[acyl-carrier-protein]: step 1/2. Its function is as follows. Catalyzes the transfer of endogenously produced octanoic acid from octanoyl-acyl-carrier-protein onto the lipoyl domains of lipoate-dependent enzymes. Lipoyl-ACP can also act as a substrate although octanoyl-ACP is likely to be the physiological substrate. This is Octanoyltransferase from Azoarcus sp. (strain BH72).